Reading from the N-terminus, the 883-residue chain is MNEQYSALRSNVSMLGKVLGDTIKDALGETILDRVETIRKLSKSSRAGNEANRQELLTTLQNLSNDELLPVARAFSQFLNLANTAEQYHSISPKGEGASNPEVIARTLRKLKDQPELNEETIKKAVESLSLELVLTAHPTEITRRTLIHKMGEVNSCLKQLDNKDIVDYERNQLMRRLRQLIAQSWHTDEIRKYRPSPVDEAKWGFAVVENSLWEGVPNYLRELNEQLEENLGYRLPVDFVPVRFTSWMGGDRDGNPNVTAEITRHVLLLSRWKATDLFLKDIQILISELSMVEATPELLELVGEAGATEPYRFLLKGLRGQLMATQAWLEARLKGQRLPKPAGLLSQNEQLWDPLYACYKSLQACGMGIIANGELLDTLRRVKCFGVPLVRIDVRQESTRHTEALGELTRYLGIGDYESWSEADKQAFLIRELNSKRPLLPRSWEPSEETSEVLNTCKAIVDAPKGSVAAYVISMAKTPSDVLAVHLLLKEAGISFALPVAPLFETLDDLNNANDVMTQLLNIDWYRGFIQGKQMVMIGYSDSAKDAGVMAASWAQYQAQDALIKTCEKAGIELTLFHGRGGSIGRGGAPAHAALLSQPPGSLKGGLRVTEQGEMIRFKYGLPEVTISSLSLYTSAILEANLLPPPEPKDAWRHIMDELSDISCDLYRGYVRENKDFVPYFRSATPEQELGKLPLGSRPAKRRPTGGVESLRAIPWIFAWTQNRLMLPAWLGAGAALQKVVEDGKQTELETMCRDWPFFSTRLGMLEMVFSKVDLWLAEYYDQRLVKPELWALGKELRELLEGDIKIVLAIANDSHLMADLPWIAESIQLRNIYTDPLNVLQAELLHRSRKAEEEGKEADPRVEQALMVTIAGVAAGMRNTG.

Active-site residues include histidine 138 and lysine 546.

It belongs to the PEPCase type 1 family. Mg(2+) is required as a cofactor.

It carries out the reaction oxaloacetate + phosphate = phosphoenolpyruvate + hydrogencarbonate. Forms oxaloacetate, a four-carbon dicarboxylic acid source for the tricarboxylic acid cycle. The chain is Phosphoenolpyruvate carboxylase from Enterobacter sp. (strain 638).